The chain runs to 205 residues: Thymidylate kinase (205 aa).

7–14 is a binding site for ATP; it reads GIDGSGKT.

Belongs to the thymidylate kinase family.

It carries out the reaction dTMP + ATP = dTDP + ADP. Its function is as follows. Phosphorylation of dTMP to form dTDP in both de novo and salvage pathways of dTTP synthesis. The sequence is that of Thymidylate kinase from Wolbachia pipientis subsp. Culex pipiens (strain wPip).